Here is a 1713-residue protein sequence, read N- to C-terminus: Cell wall protein AWA1 (1713 aa).

The first 23 residues, 1-23 (MFNRFNKLQAALALVLYSQSALG), serve as a signal peptide directing secretion. N34 carries an N-linked (GlcNAc...) asparagine glycan. Disordered stretches follow at residues 80–117 (IAPS…SSSS), 256–327 (TSTT…AESI), and 359–939 (SSGI…STAS). Low complexity predominate over residues 256-275 (TSTTSDTYISSSSPSQVTSS). Polar residues-rich tracts occupy residues 276 to 327 (AEPT…AESI) and 359 to 368 (SSGISSSVEP). Positions 374-939 (PSSDESISST…QSTSSASTAS (566 aa)) are enriched in low complexity. N1133, N1241, and N1278 each carry an N-linked (GlcNAc...) asparagine glycan. The disordered stretch occupies residues 1582–1603 (KTVTSEAPKETSETSETSAAPK). A1692 is lipidated: GPI-anchor amidated alanine. Positions 1693–1713 (AGLNANTLNALVGIFVLAFFN) are cleaved as a propeptide — removed in mature form.

It belongs to the SRP1/TIP1 family. Post-translationally, the GPI-anchor is attached to the protein in the endoplasmic reticulum and serves to target the protein to the cell surface. There, the glucosamine-inositol phospholipid moiety is cleaved off and the GPI-modified mannoprotein is covalently attached via its lipidless GPI glycan remnant to the 1,6-beta-glucan of the outer cell wall layer.

It localises to the secreted. Its subcellular location is the cell wall. It is found in the membrane. In terms of biological role, involved in cell wall organization and biosynthesis. Confers cell surface hydrophobicity (CSH). This Saccharomyces cerevisiae (strain Kyokai no. 7 / NBRC 101557) (Baker's yeast) protein is Cell wall protein AWA1 (AWA1).